We begin with the raw amino-acid sequence, 360 residues long: Protein NDRG2 (360 aa).

The interval 325 to 360 is disordered; sequence RTASLSSEGNRSRSRTLSQSSESGGGPPAPLAEVTC.

It belongs to the NDRG family.

Its subcellular location is the cytoplasm. Contributes to the regulation of the Wnt signaling pathway. Down-regulates CTNNB1-mediated transcriptional activation of target genes. May be involved in neuron differentiation. This Xenopus tropicalis (Western clawed frog) protein is Protein NDRG2.